We begin with the raw amino-acid sequence, 62 residues long: U10-hottentoxin-Hj3a (62 aa).

Positions 1–22 (MQKLLIILILFCILKFNVDVEG) are cleaved as a signal peptide. 3 disulfides stabilise this stretch: Cys28/Cys46, Cys33/Cys59, and Cys37/Cys61.

Belongs to the short scorpion toxin superfamily. Potassium channel inhibitor family. Alpha-KTx 23 subfamily. In terms of tissue distribution, expressed by the venom gland.

The protein localises to the secreted. In terms of biological role, may block potassium channels. The polypeptide is U10-hottentoxin-Hj3a (Hottentotta judaicus (Black scorpion)).